The chain runs to 487 residues: L-tartrate/succinate antiporter (487 aa).

The next 14 membrane-spanning stretches (helical) occupy residues 10–30 (YLAP…AGLE), 33–53 (TWLY…EPVP), 54–74 (GAVV…WLLF), 93–113 (WAVS…FMFG), 137–157 (TLFL…VTPS), 189–209 (IGSY…AIFL), 236–256 (FLGM…LAYV), 292–312 (LMVG…AAMV), 313–333 (GYSV…DIVS), 340–360 (VFFW…TGFI), 370–390 (SLSG…FYLL), 393–413 (FFAS…AAAL), 418–438 (IPLP…SILT), and 465–485 (IFGL…MPVV).

It belongs to the SLC13A/DASS transporter (TC 2.A.47) family. DIT1 subfamily.

Its subcellular location is the cell inner membrane. The enzyme catalyses (2R,3R)-tartrate(out) + succinate(in) = (2R,3R)-tartrate(in) + succinate(out). Catalyzes the uptake of tartrate in exchange for intracellular succinate. Essential for anaerobic L-tartrate fermentation. This is L-tartrate/succinate antiporter (ttdT) from Escherichia coli O6:K15:H31 (strain 536 / UPEC).